The following is a 175-amino-acid chain: Alkyl hydroperoxide reductase AhpD (175 aa).

Catalysis depends on Cys131, which acts as the Proton donor. A disulfide bridge connects residues Cys131 and Cys134. Cys134 functions as the Cysteine sulfenic acid (-SOH) intermediate in the catalytic mechanism.

This sequence belongs to the AhpD family.

The catalysed reaction is N(6)-[(R)-dihydrolipoyl]-L-lysyl-[lipoyl-carrier protein] + a hydroperoxide = N(6)-[(R)-lipoyl]-L-lysyl-[lipoyl-carrier protein] + an alcohol + H2O. Antioxidant protein with alkyl hydroperoxidase activity. Required for the reduction of the AhpC active site cysteine residues and for the regeneration of the AhpC enzyme activity. In Brucella abortus (strain 2308), this protein is Alkyl hydroperoxide reductase AhpD.